A 155-amino-acid polypeptide reads, in one-letter code: Large ribosomal subunit protein uL13 (155 aa).

This sequence belongs to the universal ribosomal protein uL13 family. As to quaternary structure, part of the 50S ribosomal subunit.

This protein is one of the early assembly proteins of the 50S ribosomal subunit, although it is not seen to bind rRNA by itself. It is important during the early stages of 50S assembly. In Rickettsia akari (strain Hartford), this protein is Large ribosomal subunit protein uL13.